The sequence spans 357 residues: Arginine kinase (357 aa).

A2 carries the N-acetylalanine modification. The Phosphagen kinase N-terminal domain occupies 9-91 (KLDEGFKKLE…FDPIIEDYHK (83 aa)). 64–68 (GVGVY) serves as a coordination point for L-arginine. The Phosphagen kinase C-terminal domain occupies 119–356 (FVISTRVRCG…LELIKIEKEM (238 aa)). Residues 122–126 (STRVR) and H185 contribute to the ATP site. Residue E225 coordinates L-arginine. R229 contributes to the ATP binding site. C271 is a binding site for L-arginine. ATP-binding positions include 280-284 (RASVH) and 309-314 (RGTRGE). E314 is a binding site for L-arginine.

It belongs to the ATP:guanido phosphotransferase family.

It catalyses the reaction L-arginine + ATP = N(omega)-phospho-L-arginine + ADP + H(+). In Eriocheir sinensis (Chinese mitten crab), this protein is Arginine kinase.